The following is a 194-amino-acid chain: Peptidyl-tRNA hydrolase (194 aa).

Tyrosine 16 provides a ligand contact to tRNA. The active-site Proton acceptor is the histidine 21. Phenylalanine 67, asparagine 69, and asparagine 115 together coordinate tRNA.

It belongs to the PTH family. In terms of assembly, monomer.

It localises to the cytoplasm. The catalysed reaction is an N-acyl-L-alpha-aminoacyl-tRNA + H2O = an N-acyl-L-amino acid + a tRNA + H(+). In terms of biological role, hydrolyzes ribosome-free peptidyl-tRNAs (with 1 or more amino acids incorporated), which drop off the ribosome during protein synthesis, or as a result of ribosome stalling. Functionally, catalyzes the release of premature peptidyl moieties from peptidyl-tRNA molecules trapped in stalled 50S ribosomal subunits, and thus maintains levels of free tRNAs and 50S ribosomes. The polypeptide is Peptidyl-tRNA hydrolase (Citrobacter koseri (strain ATCC BAA-895 / CDC 4225-83 / SGSC4696)).